The chain runs to 675 residues: Protein PALS1 (675 aa).

Disordered stretches follow at residues 1–34 (MTTS…KHRE) and 51–78 (RRSA…KKQE). A required for the correct localization of PALS1 and PATJ at cell-cell contacts and the normal formation of tight junctions and adherens junctions region spans residues 1–345 (MTTSHMNGHV…QQIKPPPAKE (345 aa)). 2 stretches are compositionally biased toward basic and acidic residues: residues 10–34 (VTEE…KHRE) and 54–78 (AQLE…KKQE). Residues serine 14 and serine 25 each carry the phosphoserine modification. Positions 21–140 (VDLASPEEHQ…LKHIQHTLVD (120 aa)) are interaction with PARD6B. Phosphoserine is present on residues serine 83 and serine 84. 2 L27 domains span residues 120 to 177 (KILE…NKAS) and 179 to 235 (PFPL…MQLE). Positions 181 to 243 (PLISNAQDLA…LEPITDERVY (63 aa)) are interaction with LIN7C. The region spanning 256-336 (IVRIEKARDI…TLTFVLIPSQ (81 aa)) is the PDZ domain. The region spanning 345 to 417 (ETVIHVKAHF…PGKSFQQQRE (73 aa)) is the SH3 domain. The Guanylate kinase-like domain occupies 479 to 660 (KRPIILIGPQ…AYQELLRLIN (182 aa)). Residue 486-493 (GPQNCGQN) participates in ATP binding.

Belongs to the MAGUK family. As to quaternary structure, heterodimer with MPP1. Forms a heterotrimeric complex composed of PALS1, LIN7B and PATJ; the N-terminal L27 domain of PALS1 interacts with the L27 domain of PATJ and the C-terminal L27 domain of PALS1 interacts with the L27 domain of LIN7B. Component of a complex composed of PALS1, CRB1 and MPP4. Component of a complex whose core is composed of ARHGAP17, AMOT, PALS1, PATJ and PARD3/PAR3. Component of a complex composed of PALS1, CRB1 and EPB41L5. Within the complex, interacts (via HOOK domain) with EPB41L5 (via FERM domain), and interacts with CRB1 (via intracellular domain). Component of a complex composed of PALS1, MPP3 and CRB1; PALS1 acts as a bridging protein between MPP3 (via guanylate kinase-like domain) and CRB1. Component of a complex composed of CRB3, PALS1 and PATJ. As part of the Crumbs complex; interacts with WWP1, the interaction is enhanced by AMOTL2 and facilitates WWP1 localization to the plasma membrane. The Crumbs complex promotes monoubiquitination of AMOTL2 by WWP1, which activates the Hippo signaling pathway. Interacts (via PDZ domain) with PATJ (via N-terminus). Interacts with EZR. Interacts (via PDZ domain) with CRB1 (via C-terminal ERLI motif). While the PDZ domain is sufficient for interaction with CRB1, the adjacent SH3 and guanylate kinase-like domains are likely to contribute to a high affinity interaction. Interacts with WWTR1/TAZ (via WW domain). Interacts with MPP7. Interacts (via PDZ domain) with CRB3 (via C-terminus). Interacts with LIN7C. Interacts with MPDZ. Interacts with PARD6B. Interacts with SC6A1. Interacts with CDH5; the interaction promotes PALS1 localization to cell junctions and is required for CDH5-mediated vascular lumen formation and endothelial cell. Interacts with NPHP1 (via coiled coil and SH3 domains). Interacts with NPHP4. Interacts with CRB2. (Microbial infection) Interacts (via PDZ domain) with human coronaviruses SARS-CoV and, probably, SARS-CoV-2 envelope small membrane protein E (via C-terminus); this inhibits the interaction between PALS1 and CRB3. As to expression, expressed at the outer limiting membrane in the retina (at protein level). Expressed in T lymphocytes (at protein level). Expressed in the kidney (at protein level).

The protein resides in the golgi apparatus. Its subcellular location is the cell membrane. It localises to the endomembrane system. The protein localises to the cell junction. It is found in the tight junction. The protein resides in the adherens junction. Its subcellular location is the cell projection. It localises to the axon. The protein localises to the perikaryon. It is found in the apical cell membrane. The protein resides in the endoplasmic reticulum-Golgi intermediate compartment. Functionally, plays a role in tight junction biogenesis and in the establishment of cell polarity in epithelial cells. Also involved in adherens junction biogenesis by ensuring correct localization of the exocyst complex protein EXOC4/SEC8 which allows trafficking of adherens junction structural component CDH1 to the cell surface. Plays a role through its interaction with CDH5 in vascular lumen formation and endothelial membrane polarity. Required during embryonic and postnatal retinal development. Required for the maintenance of cerebellar progenitor cells in an undifferentiated proliferative state, preventing premature differentiation, and is required for cerebellar histogenesis, fissure formation, cerebellar layer organization and cortical development. Plays a role in neuronal progenitor cell survival, potentially via promotion of mTOR signaling. Plays a role in the radial and longitudinal extension of the myelin sheath in Schwann cells. May modulate SC6A1/GAT1-mediated GABA uptake by stabilizing the transporter. Plays a role in the T-cell receptor-mediated activation of NF-kappa-B. Required for localization of EZR to the apical membrane of parietal cells and may play a role in the dynamic remodeling of the apical cytoskeleton. Required for the normal polarized localization of the vesicular marker STX4. Required for the correct trafficking of the myelin proteins PMP22 and MAG. Involved in promoting phosphorylation and cytoplasmic retention of transcriptional coactivators YAP1 and WWTR1/TAZ which leads to suppression of TGFB1-dependent transcription of target genes such as CCN2/CTGF, SERPINE1/PAI1, SNAI1/SNAIL1 and SMAD7. (Microbial infection) Acts as an interaction partner for human coronaviruses SARS-CoV and, probably, SARS-CoV-2 envelope protein E which results in delayed formation of tight junctions and disregulation of cell polarity. The chain is Protein PALS1 from Homo sapiens (Human).